The following is a 255-amino-acid chain: Small ribosomal subunit protein eS4 (255 aa).

One can recognise an S4 RNA-binding domain in the interval 43–115 (IPLLILVRDV…PTRFFTLHPI (73 aa)).

The protein belongs to the eukaryotic ribosomal protein eS4 family.

The chain is Small ribosomal subunit protein eS4 from Hyperthermus butylicus (strain DSM 5456 / JCM 9403 / PLM1-5).